The sequence spans 89 residues: Sec translocon accessory complex subunit YrbF (89 aa).

Residues 4-24 (GTLGTLVPIILMFAVLYFLLI) form a helical membrane-spanning segment.

It belongs to the YajC family. Part of the SecDF-YidC-YajC translocase complex. The SecDF-YidC-YajC translocase forms a supercomplex with SecYEG, called the holo-translocon (HTL).

It is found in the cell membrane. The SecYEG-SecDF-YajC-YidC holo-translocon (HTL) protein secretase/insertase is a supercomplex required for protein secretion, insertion of proteins into membranes, and assembly of membrane protein complexes. While the SecYEG complex is essential for assembly of a number of proteins and complexes, the SecDF-YajC-YidC subcomplex facilitates these functions. This chain is Sec translocon accessory complex subunit YrbF (yrbF), found in Bacillus subtilis (strain 168).